We begin with the raw amino-acid sequence, 622 residues long: Chaperone protein HscA homolog (622 aa).

Belongs to the heat shock protein 70 family.

In terms of biological role, chaperone involved in the maturation of iron-sulfur cluster-containing proteins. Has a low intrinsic ATPase activity which is markedly stimulated by HscB. This Burkholderia cenocepacia (strain HI2424) protein is Chaperone protein HscA homolog.